A 702-amino-acid polypeptide reads, in one-letter code: Heparin-sulfate lyase (702 aa).

The N-terminal stretch at 1–17 (MKNIFFICFCALFAFSG) is a signal peptide. The Proton acceptor role is filled by Tyr314.

Belongs to the polysaccharide lyase 12 family.

It is found in the periplasm. It catalyses the reaction Elimination of sulfate, appears to act on linkages between N-acetyl-D-glucosamine and uronate. Product is an unsaturated sugar.. Functionally, specifically cleaves heparan sulfate-rich regions of acidic polysaccharides. Does not act on N,O-desulfated glucosamine or N-acetyl-O-sulfated glucosamine linkages. Functions in cleaving metazoan heparan sulfate and providing carbon, nitrogen and sulfate sources for microorganisms. The chain is Heparin-sulfate lyase (hepC) from Bacteroides thetaiotaomicron (strain ATCC 29148 / DSM 2079 / JCM 5827 / CCUG 10774 / NCTC 10582 / VPI-5482 / E50).